The chain runs to 167 residues: Lipoprotein signal peptidase (167 aa).

Helical transmembrane passes span L10–V30, W68–L88, and S98–M118. Active-site residues include D124 and D142. Residues F138 to F158 traverse the membrane as a helical segment.

This sequence belongs to the peptidase A8 family.

The protein localises to the cell inner membrane. The enzyme catalyses Release of signal peptides from bacterial membrane prolipoproteins. Hydrolyzes -Xaa-Yaa-Zaa-|-(S,diacylglyceryl)Cys-, in which Xaa is hydrophobic (preferably Leu), and Yaa (Ala or Ser) and Zaa (Gly or Ala) have small, neutral side chains.. Its pathway is protein modification; lipoprotein biosynthesis (signal peptide cleavage). This protein specifically catalyzes the removal of signal peptides from prolipoproteins. The sequence is that of Lipoprotein signal peptidase from Xanthomonas campestris pv. campestris (strain 8004).